Consider the following 4042-residue polypeptide: Polyketide synthase-nonribosomal peptide synthetase ffsA (4042 aa).

The Ketosynthase family 3 (KS3) domain occupies 17 to 453; it reads REPIAIVGSA…GANAHAILEA (437 aa). Active-site for beta-ketoacyl synthase activity residues include C190, H330, and H373. The interval 561 to 878 is malonyl-CoA:ACP transacylase (MAT) domain; that stretch reads VFTGQGAQWK…TGLLSRGRPD (318 aa). The tract at residues 950–1083 is N-terminal hotdog fold; it reads HEILGTKCPD…GKLKVTLGEP (134 aa). Residues 950–1249 form a dehydratase (DH) domain region; the sequence is HEILGTKCPD…LQTKPLANAT (300 aa). One can recognise a PKS/mFAS DH domain in the interval 950–1251; sequence HEILGTKCPD…TKPLANATAA (302 aa). H982 serves as the catalytic Proton acceptor; for dehydratase activity. Positions 1098–1251 are C-terminal hotdog fold; the sequence is MIDVDSERFY…TKPLANATAA (154 aa). The active-site Proton donor; for dehydratase activity is D1158. The segment at 1390–1613 is methyltransferase (MT) domain; it reads DNLLNDFYVH…VDDHVNFLRD (224 aa). The tract at residues 2116–2289 is ketoreductase (KR)domain; sequence TYWLVGLSGG…AGSAINIGTI (174 aa). A Carrier 1 domain is found at 2399–2476; the sequence is EAREIIEESL…EMVAAAQEKL (78 aa). At S2436 the chain carries O-(pantetheine 4'-phosphoryl)serine. The disordered stretch occupies residues 2515–2601; the sequence is EKAEYADFDD…FDSDSDNASI (87 aa). The span at 2520-2532 shows a compositional bias: acidic residues; the sequence is ADFDDENEEEGIP. The segment at 2629-3061 is condensation; it reads RTLPMSFGQT…ISRPSLYDPQ (433 aa). An adenylation region spans residues 3089–3486; sequence EIVKAHGSKV…EDGHLVLEGR (398 aa). One can recognise a Carrier 2 domain in the interval 3607-3684; it reads RDSTEKLKDI…AMARMVDPTA (78 aa). S3644 bears the O-(pantetheine 4'-phosphoryl)serine mark. Residues 3750–3971 are reductase-like domain; it reads ITGATGFLGK…DFVDVEKVAT (222 aa).

In the C-terminal section; belongs to the NRP synthetase family.

It participates in mycotoxin biosynthesis. Functionally, hybrid PKS-NRPS synthetase; part of the gene cluster that mediates the biosynthesis of the cytotoxic leucine-containing cytochalasans, including aspochalasin C, aspochalasin E, TMC-169, flavichalasine F, aspergillin PZ, aspochalasin M and flavichalasine G. The first step in the pathway is catalyzed by the hybrid PKS-NRPS ffsA that utilizes 8 units of malonyl-CoA to iteratively assemble the octaketide chain before addition of L-leucine by the C-terminal NRPS modules. Because ffsA lacks a designated enoylreductase (ER) domain, the required activity is provided the enoyl reductase fssC. The methyltransferase (MT) domain of ffsA catalyzes the alpha-methylation at C10 and C14 using S-adenosyl-L-methionine as the methyl-donating cosubstrate. Reduction by the hydrolyase ffsE, followed by dehydration and intra-molecular Diels-Alder cyclization by the Diels-Alderase ffsF then yield the required isoindolone-fused macrocycle. A number of oxidative steps catalyzed by the tailoring cytochrome P450 monooxygenase ffsD, the FAD-linked oxidoreductase ffsJ and the short-chain dehydrogenase/reductase ffsI, are further required to afford the final products. This Aspergillus flavipes protein is Polyketide synthase-nonribosomal peptide synthetase ffsA.